The sequence spans 215 residues: Pyrrolidone-carboxylate peptidase (215 aa).

Active-site residues include Glu-78, Cys-141, and His-165.

This sequence belongs to the peptidase C15 family. As to quaternary structure, homotetramer.

It localises to the cytoplasm. It carries out the reaction Release of an N-terminal pyroglutamyl group from a polypeptide, the second amino acid generally not being Pro.. Its function is as follows. Removes 5-oxoproline from various penultimate amino acid residues except L-proline. In Streptococcus suis (strain 98HAH33), this protein is Pyrrolidone-carboxylate peptidase.